The sequence spans 183 residues: ER membrane protein complex subunit 4 (183 aa).

The residue at position 2 (threonine 2) is an N-acetylthreonine. Residues 2–66 (TAQGGLVANR…VQETDRILVE (65 aa)) lie on the Cytoplasmic side of the membrane. The interval 20–39 (ELSGPGGGSRGRSDRGSGQG) is disordered. Serine 36 is subject to Phosphoserine. Residues 67–87 (KRCWDIALGPLKQIPMNLFIM) traverse the membrane as a helical segment. The Lumenal portion of the chain corresponds to 88–98 (YMAGNTISIFP). The chain crosses the membrane as a helical span at residues 99 to 120 (TMMVCMMAWRPIQALMAISATF). At 121–127 (KMLESSS) the chain is on the cytoplasmic side. A helical transmembrane segment spans residues 128-148 (QKFLQGLVYLIGNLMGLALAV). Topologically, residues 149 to 183 (YKCQSMGLLPTHASDWLAFIEPPERMEFSGGGLLL) are lumenal.

Belongs to the EMC4 family. Component of the ER membrane protein complex (EMC). Isoform 1 is expressed in brain and heart. Isoform 2 is expressed in heart.

The protein localises to the endoplasmic reticulum membrane. Its function is as follows. Part of the endoplasmic reticulum membrane protein complex (EMC) that enables the energy-independent insertion into endoplasmic reticulum membranes of newly synthesized membrane proteins. Preferentially accommodates proteins with transmembrane domains that are weakly hydrophobic or contain destabilizing features such as charged and aromatic residues. Involved in the cotranslational insertion of multi-pass membrane proteins in which stop-transfer membrane-anchor sequences become ER membrane spanning helices. It is also required for the post-translational insertion of tail-anchored/TA proteins in endoplasmic reticulum membranes. By mediating the proper cotranslational insertion of N-terminal transmembrane domains in an N-exo topology, with translocated N-terminus in the lumen of the ER, controls the topology of multi-pass membrane proteins like the G protein-coupled receptors. By regulating the insertion of various proteins in membranes, it is indirectly involved in many cellular processes. This is ER membrane protein complex subunit 4 (EMC4) from Homo sapiens (Human).